Consider the following 370-residue polypeptide: Proto-oncogene Wnt-1 (370 aa).

Residues 1–27 (MGLWALLPGWVSATLLLALAALPAALA) form the signal peptide. N-linked (GlcNAc...) asparagine glycosylation occurs at Asn-29. Intrachain disulfides connect Cys-93–Cys-104, Cys-143–Cys-151, Cys-153–Cys-170, Cys-218–Cys-232, Cys-220–Cys-227, Cys-299–Cys-330, Cys-315–Cys-325, Cys-329–Cys-369, Cys-345–Cys-360, Cys-347–Cys-357, and Cys-352–Cys-353. A lipid anchor (O-palmitoleoyl serine; by PORCN) is attached at Ser-224. N-linked (GlcNAc...) asparagine glycosylation is found at Asn-316 and Asn-346. Residue Asn-359 is glycosylated (N-linked (GlcNAc...) asparagine).

It belongs to the Wnt family. As to quaternary structure, forms a soluble 1:1 complex with AFM; this prevents oligomerization and is required for prolonged biological activity. The complex with AFM may represent the physiological form in body fluids. Interacts with PORCN. Interacts with RSPO1, RSPO2 and RSPO3. Interacts with WLS. In terms of processing, palmitoleoylation is required for efficient binding to frizzled receptors. Palmitoleoylation is necessary for proper trafficking to cell surface. Depalmitoleoylated by NOTUM, leading to inhibit Wnt signaling pathway.

The protein localises to the secreted. It is found in the extracellular space. It localises to the extracellular matrix. In terms of biological role, ligand for members of the frizzled family of seven transmembrane receptors. Acts in the canonical Wnt signaling pathway by promoting beta-catenin-dependent transcriptional activation. In some developmental processes, is also a ligand for the coreceptor RYK, thus triggering Wnt signaling. Plays an essential role in the development of the embryonic brain and central nervous system (CNS). Has a role in osteoblast function, bone development and bone homeostasis. The chain is Proto-oncogene Wnt-1 (WNT1) from Homo sapiens (Human).